The primary structure comprises 122 residues: UPF0102 protein VV1_0590 (122 aa).

Belongs to the UPF0102 family.

The chain is UPF0102 protein VV1_0590 from Vibrio vulnificus (strain CMCP6).